A 434-amino-acid polypeptide reads, in one-letter code: F-box/LRR-repeat protein 21 (434 aa).

The F-box domain maps to Arg-39–Phe-85. LRR repeat units follow at residues Leu-140 to His-165, Asp-187 to Ser-213, Cys-214 to Tyr-239, Leu-242 to Val-265, Gly-322 to Ala-347, Gly-349 to Glu-374, and Cys-375 to Glu-400.

Part of the SCF (SKP1-CUL1-F-box) E3 ubiquitin-protein ligase complex SCF(FBXL21) composed of CUL1, SKP1, RBX1 and FBXL21. Interacts with CRY2. Interacts with CRY1. Expressed in the adenohypophysis, hypothalamus (especially in the suprachiasmatic nucleus or nuclei, SCN) and pineal, all neuroendocrine structures associated with timing and homeostasis.

It is found in the cytoplasm. Its subcellular location is the cytosol. The protein localises to the nucleus. The protein operates within protein modification; protein ubiquitination. Functionally, substrate-recognition component of the SCF(FBXL21) E3 ubiquitin ligase complex involved in circadian rhythm function. Plays a key role in the maintenance of both the speed and the robustness of the circadian clock oscillation. The SCF(FBXL21) complex mainly acts in the cytosol and mediates ubiquitination of CRY proteins (CRY1 and CRY2), leading to CRY proteins stabilization. The SCF(FBXL21) complex counteracts the activity of the SCF(FBXL3) complex and protects CRY proteins from degradation. Involved in the hypothalamic suprachiasmatic nucleus (SCN) clock regulating temporal organization of the daily activities. This is F-box/LRR-repeat protein 21 (Fbxl21) from Ovis aries (Sheep).